The sequence spans 78 residues: Putative membrane protein insertion efficiency factor (78 aa).

The protein belongs to the UPF0161 family.

The protein localises to the cell inner membrane. Could be involved in insertion of integral membrane proteins into the membrane. The sequence is that of Putative membrane protein insertion efficiency factor from Prochlorococcus marinus (strain MIT 9301).